A 251-amino-acid polypeptide reads, in one-letter code: MPIRNIAIGRPDEATRPDALKAALAEFISTLIFVVAGSGSGMAFNKLTENGATTPSGLVAAAVAHAFGLFVAVSVGANISGGHVNPAVTFGAFIGGNITLLRGILYWIAQLLGSVVACLILKFATGGLAVPAFGLSAGVGVLNAFVFEIVMTFGLVYTVYATAIDPKNGSLGTIAPIAIGFIVGANILAGGAFSGASMNPAVAFGPAVVSWTWTNHWVYWAGPLVGGGIAGLIYEVFFINTTHEQLPTTDY.

Met-1 bears the N-acetylmethionine mark. The Cytoplasmic segment spans residues 1–23 (MPIRNIAIGRPDEATRPDALKAA). The chain crosses the membrane as a helical span at residues 24-44 (LAEFISTLIFVVAGSGSGMAF). Residues 45 to 56 (NKLTENGATTPS) are Vacuolar-facing. Residues 57–77 (GLVAAAVAHAFGLFVAVSVGA) form a helical membrane-spanning segment. The Cytoplasmic segment spans residues 78–103 (NISGGHVNPAVTFGAFIGGNITLLRG). An NPA 1 motif is present at residues 85–87 (NPA). Residues 104–124 (ILYWIAQLLGSVVACLILKFA) traverse the membrane as a helical segment. The Vacuolar portion of the chain corresponds to 125–143 (TGGLAVPAFGLSAGVGVLN). The helical transmembrane segment at 144–164 (AFVFEIVMTFGLVYTVYATAI) threads the bilayer. Residues 165–172 (DPKNGSLG) are Cytoplasmic-facing. A helical membrane pass occupies residues 173–193 (TIAPIAIGFIVGANILAGGAF). The Vacuolar portion of the chain corresponds to 194-218 (SGASMNPAVAFGPAVVSWTWTNHWV). An NPA 2 motif is present at residues 199-201 (NPA). Residues 219–239 (YWAGPLVGGGIAGLIYEVFFI) traverse the membrane as a helical segment. Topologically, residues 240–251 (NTTHEQLPTTDY) are cytoplasmic.

This sequence belongs to the MIP/aquaporin (TC 1.A.8) family. TIP (TC 1.A.8.10) subfamily. As to quaternary structure, interacts with cucumber mosaic virus (CMV) Protein 1a. In terms of tissue distribution, in all the vegetative organs, but not in seeds. Preferentially expressed in roots.

It localises to the vacuole membrane. Its function is as follows. Water channel required to facilitate the transport of water, diffusion of amino acids and/or peptides from the vacuolar compartment to the cytoplasm. Does not promote glycerol permeability. May play a role in the control of cell turgor and cell expansion. Its function is impaired by Hg(2+). May be involved in a vesicle-based metabolite routing through or between pre-vacuolar compartments and the central vacuole. Transports urea in yeast cells in a pH-independent manner. Transports H(2)O(2) in yeast cells. The polypeptide is Aquaporin TIP1-1 (TIP1-1) (Arabidopsis thaliana (Mouse-ear cress)).